A 200-amino-acid chain; its full sequence is Holliday junction branch migration complex subunit RuvA (200 aa).

The segment at M1–A64 is domain I. The segment at E65–I143 is domain II. A flexible linker region spans residues A144 to P147. The domain III stretch occupies residues A148 to R200.

It belongs to the RuvA family. As to quaternary structure, homotetramer. Forms an RuvA(8)-RuvB(12)-Holliday junction (HJ) complex. HJ DNA is sandwiched between 2 RuvA tetramers; dsDNA enters through RuvA and exits via RuvB. An RuvB hexamer assembles on each DNA strand where it exits the tetramer. Each RuvB hexamer is contacted by two RuvA subunits (via domain III) on 2 adjacent RuvB subunits; this complex drives branch migration. In the full resolvosome a probable DNA-RuvA(4)-RuvB(12)-RuvC(2) complex forms which resolves the HJ.

The protein localises to the cytoplasm. In terms of biological role, the RuvA-RuvB-RuvC complex processes Holliday junction (HJ) DNA during genetic recombination and DNA repair, while the RuvA-RuvB complex plays an important role in the rescue of blocked DNA replication forks via replication fork reversal (RFR). RuvA specifically binds to HJ cruciform DNA, conferring on it an open structure. The RuvB hexamer acts as an ATP-dependent pump, pulling dsDNA into and through the RuvAB complex. HJ branch migration allows RuvC to scan DNA until it finds its consensus sequence, where it cleaves and resolves the cruciform DNA. In Gluconacetobacter diazotrophicus (strain ATCC 49037 / DSM 5601 / CCUG 37298 / CIP 103539 / LMG 7603 / PAl5), this protein is Holliday junction branch migration complex subunit RuvA.